The chain runs to 272 residues: MLVFDKVNRVYPDGTQAVKNVSVHLEKGEFCVLLGPSGAGKSTLMNMVNGLVEPSSGEIILDGGVLNKKNLQLIQRSVSMIHQQLYLIPRLSVLHNVLTGILPTANFWTSLVKSFPVKDQQRAFELLSEVGLEEKHLMRRASALSGGQQQRVAIARAFMANPKVVLADEPVASLDPAMSRSVLNSLKHAAQTNGATVLCTLHQIDYALEFADRIVALREGEVFFDGHPSDMDEDIQKRLYEIEHETKEKMQKNHQKALEDSLSFELKIKAVA.

Residues 2-244 enclose the ABC transporter domain; sequence LVFDKVNRVY…IQKRLYEIEH (243 aa). 35–42 contributes to the ATP binding site; sequence GPSGAGKS.

It belongs to the ABC transporter superfamily. Phosphonates importer (TC 3.A.1.9.1) family. In terms of assembly, the complex is composed of two ATP-binding proteins (PhnC), two transmembrane proteins (PhnE) and a solute-binding protein (PhnD).

It localises to the cell inner membrane. The enzyme catalyses phosphonate(out) + ATP + H2O = phosphonate(in) + ADP + phosphate + H(+). In terms of biological role, part of the ABC transporter complex PhnCDE involved in phosphonates import. Responsible for energy coupling to the transport system. The sequence is that of Phosphonates import ATP-binding protein PhnC from Hydrogenovibrio crunogenus (strain DSM 25203 / XCL-2) (Thiomicrospira crunogena).